A 303-amino-acid polypeptide reads, in one-letter code: Ubiquinone biosynthesis protein COQ4, mitochondrial (303 aa).

Zn(2+) is bound by residues His191, Asp192, His195, and Glu207.

Belongs to the COQ4 family. Component of a multi-subunit COQ enzyme complex, composed of at least COQ3, COQ4, COQ5, COQ6, COQ7 and COQ9. Requires Zn(2+) as cofactor.

Its subcellular location is the mitochondrion inner membrane. It carries out the reaction a 4-hydroxy-3-methoxy-5-(all-trans-polyprenyl)benzoate + H(+) = a 2-methoxy-6-(all-trans-polyprenyl)phenol + CO2. The protein operates within cofactor biosynthesis; ubiquinone biosynthesis. Functionally, lyase that catalyzes the C1-decarboxylation of 4-hydroxy-3-methoxy-5-(all-trans-polyprenyl)benzoic acid into 2-methoxy-6-(all-trans-polyprenyl)phenol during ubiquinone biosynthesis. In Komagataella phaffii (strain GS115 / ATCC 20864) (Yeast), this protein is Ubiquinone biosynthesis protein COQ4, mitochondrial.